The following is a 225-amino-acid chain: uncharacterized protein (225 aa).

A Fe2OG dioxygenase domain is found at 114–219 (DAEAIIMQVY…RLSVTMRRII (106 aa)).

This sequence belongs to the iron/ascorbate-dependent oxidoreductase family.

It is found in the cytoplasm. It localises to the nucleus. This is an uncharacterized protein from Schizosaccharomyces pombe (strain 972 / ATCC 24843) (Fission yeast).